Consider the following 156-residue polypeptide: Small ribosomal subunit protein uS7 (156 aa).

The protein belongs to the universal ribosomal protein uS7 family. Part of the 30S ribosomal subunit. Contacts proteins S9 and S11.

One of the primary rRNA binding proteins, it binds directly to 16S rRNA where it nucleates assembly of the head domain of the 30S subunit. Is located at the subunit interface close to the decoding center, probably blocks exit of the E-site tRNA. In Microcystis aeruginosa (strain NIES-843 / IAM M-2473), this protein is Small ribosomal subunit protein uS7.